Here is a 102-residue protein sequence, read N- to C-terminus: NADH-quinone oxidoreductase subunit K (102 aa).

Transmembrane regions (helical) follow at residues Ile4 to Leu24, Met30 to Val50, and Val62 to Leu82.

It belongs to the complex I subunit 4L family. NDH-1 is composed of 14 different subunits. Subunits NuoA, H, J, K, L, M, N constitute the membrane sector of the complex.

It localises to the cell inner membrane. It catalyses the reaction a quinone + NADH + 5 H(+)(in) = a quinol + NAD(+) + 4 H(+)(out). Functionally, NDH-1 shuttles electrons from NADH, via FMN and iron-sulfur (Fe-S) centers, to quinones in the respiratory chain. The immediate electron acceptor for the enzyme in this species is believed to be ubiquinone. Couples the redox reaction to proton translocation (for every two electrons transferred, four hydrogen ions are translocated across the cytoplasmic membrane), and thus conserves the redox energy in a proton gradient. This Chromohalobacter salexigens (strain ATCC BAA-138 / DSM 3043 / CIP 106854 / NCIMB 13768 / 1H11) protein is NADH-quinone oxidoreductase subunit K.